The primary structure comprises 451 residues: Velvet complex subunit 2 (451 aa).

Disordered stretches follow at residues 1-95 (MNTT…PRSI), 205-312 (PGQS…QTNP), and 426-451 (PIRKDGKDGPGKGGKDGSRGDDDDDY). 3 stretches are compositionally biased toward polar residues: residues 18–28 (TMPSLHDTTYR), 40–62 (MPQTMASQHSTISAYEQYNNSLP), and 205–217 (PGQSQREPTSPTY). The 337-residue stretch at 92 to 428 (PRSITVDGRK…ATQGIKIPIR (337 aa)) folds into the Velvet domain. Residues 267 to 283 (PQQSNYYYPQPSQSIPS) show a composition bias toward low complexity. The segment covering 427–445 (IRKDGKDGPGKGGKDGSRG) has biased composition (basic and acidic residues).

The protein belongs to the velvet family. VelB subfamily. As to quaternary structure, component of the heterotrimeric velvet complex composed of LAE1, VEL1 and VEL2; VEL1 acting as a bridging protein between LAE1 and VEL2. Forms a heterodimeric complex with VOS1; the formation of the VEL2-VOS1 complex is light-dependent.

The protein resides in the nucleus. The protein localises to the cytoplasm. Its function is as follows. Component of the velvet transcription factor complex that controls sexual/asexual developmental ratio in response to light, promoting sexual development in the darkness while stimulating asexual sporulation under illumination. The velvet complex acts as a global regulator for secondary metabolite gene expression. Component of the VEL2-VOS1 heterodimeric complex that plays a dual role in activating genes associated with spore maturation and repressing certain development-associated genes. The VEL2-VOS1 complex binds DNA through the DNA-binding domain of VOS1 that recognizes an 11-nucleotide consensus sequence 5'-CTGGCCGCGGC-3' consisting of two motifs in the promoters of key developmental regulatory genes. Controls the expression of the oxalic acid and melanin gene clusters. Involved in the resistance to oxidative stress. Required for full virulence. This is Velvet complex subunit 2 from Botryotinia fuckeliana (strain B05.10) (Noble rot fungus).